Here is a 296-residue protein sequence, read N- to C-terminus: Pseudouridine-5'-phosphate glycosidase (296 aa).

Residue Glu-21 is the Proton donor of the active site. Substrate-binding residues include Lys-81 and Val-101. Asp-130 contributes to the Mn(2+) binding site. Position 132 to 134 (132 to 134) interacts with substrate; that stretch reads SQD. Lys-151 functions as the Nucleophile in the catalytic mechanism.

The protein belongs to the pseudouridine-5'-phosphate glycosidase family. As to quaternary structure, homotrimer. Requires Mn(2+) as cofactor.

It catalyses the reaction D-ribose 5-phosphate + uracil = psi-UMP + H2O. In terms of biological role, catalyzes the reversible cleavage of pseudouridine 5'-phosphate (PsiMP) to ribose 5-phosphate and uracil. Functions biologically in the cleavage direction, as part of a pseudouridine degradation pathway. In Fervidobacterium nodosum (strain ATCC 35602 / DSM 5306 / Rt17-B1), this protein is Pseudouridine-5'-phosphate glycosidase.